The primary structure comprises 379 residues: Demethylspheroidene O-methyltransferase (379 aa).

S-adenosyl-L-methionine is bound by residues Asp235 and Arg279.

This sequence belongs to the class I-like SAM-binding methyltransferase superfamily. Cation-independent O-methyltransferase family.

It catalyses the reaction demethylspheroidene + S-adenosyl-L-methionine = spheroidene + S-adenosyl-L-homocysteine + H(+). It functions in the pathway carotenoid biosynthesis; spheroidene biosynthesis. Methyltransferase that mediates the O-methylation of 1-hydroxy carotenoids. Converts hydroxyneurosporene to methoxyneurosporene or demethylspheroidene to spheroidene. Also able to produce spirilloxanthin. The protein is Demethylspheroidene O-methyltransferase (crtF) of Cereibacter sphaeroides (strain ATCC 17023 / DSM 158 / JCM 6121 / CCUG 31486 / LMG 2827 / NBRC 12203 / NCIMB 8253 / ATH 2.4.1.) (Rhodobacter sphaeroides).